A 511-amino-acid polypeptide reads, in one-letter code: ATP synthase subunit alpha (511 aa).

169–176 (GDRQTGKT) provides a ligand contact to ATP.

Belongs to the ATPase alpha/beta chains family. F-type ATPases have 2 components, CF(1) - the catalytic core - and CF(0) - the membrane proton channel. CF(1) has five subunits: alpha(3), beta(3), gamma(1), delta(1), epsilon(1). CF(0) has three main subunits: a(1), b(2) and c(9-12). The alpha and beta chains form an alternating ring which encloses part of the gamma chain. CF(1) is attached to CF(0) by a central stalk formed by the gamma and epsilon chains, while a peripheral stalk is formed by the delta and b chains.

The protein resides in the cell inner membrane. It catalyses the reaction ATP + H2O + 4 H(+)(in) = ADP + phosphate + 5 H(+)(out). In terms of biological role, produces ATP from ADP in the presence of a proton gradient across the membrane. The alpha chain is a regulatory subunit. In Paracoccus denitrificans (strain Pd 1222), this protein is ATP synthase subunit alpha.